The following is an 877-amino-acid chain: Alanine--tRNA ligase (877 aa).

The Zn(2+) site is built by histidine 567, histidine 571, cysteine 669, and histidine 673.

It belongs to the class-II aminoacyl-tRNA synthetase family. Requires Zn(2+) as cofactor.

The protein resides in the cytoplasm. The enzyme catalyses tRNA(Ala) + L-alanine + ATP = L-alanyl-tRNA(Ala) + AMP + diphosphate. In terms of biological role, catalyzes the attachment of alanine to tRNA(Ala) in a two-step reaction: alanine is first activated by ATP to form Ala-AMP and then transferred to the acceptor end of tRNA(Ala). Also edits incorrectly charged Ser-tRNA(Ala) and Gly-tRNA(Ala) via its editing domain. The chain is Alanine--tRNA ligase from Rickettsia bellii (strain RML369-C).